The primary structure comprises 363 residues: Small ribosomal subunit biogenesis GTPase RsgA (363 aa).

The region spanning 112 to 268 (HQQVIAANID…LIDTPGMREL (157 aa)) is the CP-type G domain. GTP contacts are provided by residues 157–160 (TKAD) and 210–218 (GSSGAGKST). Positions 291, 296, 298, and 304 each coordinate Zn(2+). The segment at 340–363 (RVAQNNRGKGSGKRPASIDRPGRR) is disordered.

Belongs to the TRAFAC class YlqF/YawG GTPase family. RsgA subfamily. In terms of assembly, monomer. Associates with 30S ribosomal subunit, binds 16S rRNA. It depends on Zn(2+) as a cofactor.

Its subcellular location is the cytoplasm. In terms of biological role, one of several proteins that assist in the late maturation steps of the functional core of the 30S ribosomal subunit. Helps release RbfA from mature subunits. May play a role in the assembly of ribosomal proteins into the subunit. Circularly permuted GTPase that catalyzes slow GTP hydrolysis, GTPase activity is stimulated by the 30S ribosomal subunit. This chain is Small ribosomal subunit biogenesis GTPase RsgA, found in Xanthomonas oryzae pv. oryzae (strain MAFF 311018).